A 220-amino-acid chain; its full sequence is Octanoyltransferase (220 aa).

The BPL/LPL catalytic domain maps to 31–206; it reads DDTPDEVWLV…ELVTLLDYEQ (176 aa). Residues 70 to 77, 137 to 139, and 150 to 152 each bind substrate; these read RGGQVTYH, SLG, and GLA. Cys-168 functions as the Acyl-thioester intermediate in the catalytic mechanism.

Belongs to the LipB family.

The protein localises to the cytoplasm. It carries out the reaction octanoyl-[ACP] + L-lysyl-[protein] = N(6)-octanoyl-L-lysyl-[protein] + holo-[ACP] + H(+). It functions in the pathway protein modification; protein lipoylation via endogenous pathway; protein N(6)-(lipoyl)lysine from octanoyl-[acyl-carrier-protein]: step 1/2. Catalyzes the transfer of endogenously produced octanoic acid from octanoyl-acyl-carrier-protein onto the lipoyl domains of lipoate-dependent enzymes. Lipoyl-ACP can also act as a substrate although octanoyl-ACP is likely to be the physiological substrate. This chain is Octanoyltransferase, found in Vibrio campbellii (strain ATCC BAA-1116).